Reading from the N-terminus, the 202-residue chain is Crustacean calcium-binding protein 23 (202 aa).

N-acetylserine is present on serine 1. 4 EF-hand domains span residues 33-68 (SGLL…FGLD), 69-104 (LSDG…EMTE), 105-140 (PRKK…KTHP), and 148-185 (TEDE…LSKA). Positions 84, 93, 118, 122, and 129 each coordinate Ca(2+).

In terms of assembly, monomer or disulfide-linked dimers. Striated muscle and brain.

Functionally, possibly acts as a regulatory protein and not as a calcium buffer or transport protein. The sequence is that of Crustacean calcium-binding protein 23 from Faxonius limosus (Spinycheek crayfish).